Here is a 209-residue protein sequence, read N- to C-terminus: Imidazole glycerol phosphate synthase subunit HisH (209 aa).

The Glutamine amidotransferase type-1 domain occupies 1-205 (MIAIIDYGMG…KGVVEAWKSS (205 aa)). Cys-79 acts as the Nucleophile in catalysis. Catalysis depends on residues His-180 and Glu-182.

As to quaternary structure, heterodimer of HisH and HisF.

The protein localises to the cytoplasm. It carries out the reaction 5-[(5-phospho-1-deoxy-D-ribulos-1-ylimino)methylamino]-1-(5-phospho-beta-D-ribosyl)imidazole-4-carboxamide + L-glutamine = D-erythro-1-(imidazol-4-yl)glycerol 3-phosphate + 5-amino-1-(5-phospho-beta-D-ribosyl)imidazole-4-carboxamide + L-glutamate + H(+). The enzyme catalyses L-glutamine + H2O = L-glutamate + NH4(+). Its pathway is amino-acid biosynthesis; L-histidine biosynthesis; L-histidine from 5-phospho-alpha-D-ribose 1-diphosphate: step 5/9. Functionally, IGPS catalyzes the conversion of PRFAR and glutamine to IGP, AICAR and glutamate. The HisH subunit catalyzes the hydrolysis of glutamine to glutamate and ammonia as part of the synthesis of IGP and AICAR. The resulting ammonia molecule is channeled to the active site of HisF. This is Imidazole glycerol phosphate synthase subunit HisH from Bacillus mycoides (strain KBAB4) (Bacillus weihenstephanensis).